The primary structure comprises 383 residues: MAKHLFTSESVSEGHPDKIADQISDAVLDAILEQDPKARVACETYVKTGMVMVGGEITTSAWVDIEELTRKTVREIGYVHSDMGFDADSCAVLSAIGKQSPDINQGVDRADPREQGAGDQGLMFGYASNETDVLMPAPITYAHALVKRQSEVRKDGTLSWLRPDAKSQVTFAYDEGKIVGIDAIVLSTQHCDSVSQSDLVEGVMETIIKPVVPAQWLNKDTKFFINPTGRFVIGGPMGDCGLTGRKIIVDTYGGMARHGGGAFSGKDPSKVDRSAAYAARYVAKNIVAAGLADRCEIQVSYAIGVAEPTSISIETFGTGKLPEDKLIALVRQHFDLRPYGLTEMLNLARPIYQATAAYGHFGRNEFPWEQTNKAEALRADSGL.

An ATP-binding site is contributed by His-15. A Mg(2+)-binding site is contributed by Asp-17. A K(+)-binding site is contributed by Glu-43. 2 residues coordinate L-methionine: Glu-56 and Gln-99. Residues 99-109 (QSPDINQGVDR) are flexible loop. ATP-binding positions include 164 to 166 (DAK), 230 to 231 (RF), Asp-239, 245 to 246 (RK), Ala-262, and Lys-266. An L-methionine-binding site is contributed by Asp-239. Residue Lys-270 coordinates L-methionine.

Belongs to the AdoMet synthase family. Homotetramer; dimer of dimers. Mg(2+) serves as cofactor. The cofactor is K(+).

It localises to the cytoplasm. It catalyses the reaction L-methionine + ATP + H2O = S-adenosyl-L-methionine + phosphate + diphosphate. It participates in amino-acid biosynthesis; S-adenosyl-L-methionine biosynthesis; S-adenosyl-L-methionine from L-methionine: step 1/1. Functionally, catalyzes the formation of S-adenosylmethionine (AdoMet) from methionine and ATP. The overall synthetic reaction is composed of two sequential steps, AdoMet formation and the subsequent tripolyphosphate hydrolysis which occurs prior to release of AdoMet from the enzyme. The polypeptide is S-adenosylmethionine synthase (Shewanella amazonensis (strain ATCC BAA-1098 / SB2B)).